Reading from the N-terminus, the 515-residue chain is FAD-dependent oxidoreductase domain-containing protein 1 homolog (515 aa).

Positions 18-37 are disordered; sequence AGATSNGSGSSGGDKSGEDL. Residues 100–116 traverse the membrane as a helical segment; sequence VLIIGGGGVGSSIAYWL.

As to quaternary structure, associates with mitochondrial complex I assembly intermediates during its biogenesis. It depends on FAD as a cofactor.

Its subcellular location is the mitochondrion inner membrane. Its function is as follows. Involved in the assembly of the mitochondrial membrane respiratory chain NADH dehydrogenase (Complex I). The chain is FAD-dependent oxidoreductase domain-containing protein 1 homolog from Drosophila melanogaster (Fruit fly).